Reading from the N-terminus, the 440-residue chain is MAAQVPTEALKELNVGGPATNDKAANPTEGNGVDHDSDDSDEEGEEVAAPAAGGAAKKKKKNKKKKKKKSPTAQSDPPRVLMSSLFPNKNYPKGQEEEYRDENLYRTTNEEKRHLDNLNNDFLTDYREAAEIHRQVRQWAQKNIKPGQTLTEIAEGIEDGVRALTGHPGIEEGDAYKGGMGFPCGLSLNHCAAHYTPNAGNKMVLSQGDVMKVDFGVHVNGRIVDSAFTMAFEPQYDNLLAAVKDATNAGVKEAGIDVRVGDVGGVIQEVMESYEVEIDGTTYPVKSIRNLNGHTIERWSIHGTKSVPIVKSNDTTKMEEGDVFAVETFGSTGNGFVREDMEVSHYAKRGEGHAALRLDSAKRLLNVINKNFGTLPFCRRYLDRLGQDKYLLGLNNLVSSGIVEAYPPLCDKKGSYTAQFEHTILLRPTVKEVISRGDDY.

A disordered region spans residues 1–102 (MAAQVPTEAL…KGQEEEYRDE (102 aa)). The segment covering 36-46 (DSDDSDEEGEE) has biased composition (acidic residues). The segment covering 56-70 (AKKKKKNKKKKKKKS) has biased composition (basic residues). A substrate-binding site is contributed by His194. The a divalent metal cation site is built by Asp214, Asp225, and His294. Position 302 (His302) interacts with substrate. Residues Glu327 and Glu421 each contribute to the a divalent metal cation site.

This sequence belongs to the peptidase M24A family. Methionine aminopeptidase eukaryotic type 2 subfamily. Co(2+) serves as cofactor. Requires Zn(2+) as cofactor. The cofactor is Mn(2+). It depends on Fe(2+) as a cofactor.

It is found in the cytoplasm. It carries out the reaction Release of N-terminal amino acids, preferentially methionine, from peptides and arylamides.. Functionally, cotranslationally removes the N-terminal methionine from nascent proteins. The N-terminal methionine is often cleaved when the second residue in the primary sequence is small and uncharged (Met-Ala-, Cys, Gly, Pro, Ser, Thr, or Val). The protein is Methionine aminopeptidase 2-2 of Colletotrichum graminicola (strain M1.001 / M2 / FGSC 10212) (Maize anthracnose fungus).